The chain runs to 259 residues: 7-cyano-7-deazaguanine synthase (259 aa).

ATP is bound at residue 32-42 (LSGGLDSVTCL). Residues Cys223, Cys233, Cys236, and Cys239 each coordinate Zn(2+).

Belongs to the QueC family. Zn(2+) is required as a cofactor.

The catalysed reaction is 7-carboxy-7-deazaguanine + NH4(+) + ATP = 7-cyano-7-deazaguanine + ADP + phosphate + H2O + H(+). It participates in purine metabolism; 7-cyano-7-deazaguanine biosynthesis. In terms of biological role, catalyzes the ATP-dependent conversion of 7-carboxy-7-deazaguanine (CDG) to 7-cyano-7-deazaguanine (preQ(0)). In Psychrobacter arcticus (strain DSM 17307 / VKM B-2377 / 273-4), this protein is 7-cyano-7-deazaguanine synthase.